We begin with the raw amino-acid sequence, 101 residues long: Large ribosomal subunit protein uL24 (101 aa).

Belongs to the universal ribosomal protein uL24 family. As to quaternary structure, part of the 50S ribosomal subunit.

In terms of biological role, one of two assembly initiator proteins, it binds directly to the 5'-end of the 23S rRNA, where it nucleates assembly of the 50S subunit. Functionally, one of the proteins that surrounds the polypeptide exit tunnel on the outside of the subunit. The polypeptide is Large ribosomal subunit protein uL24 (Borrelia turicatae (strain 91E135)).